Reading from the N-terminus, the 343-residue chain is Anthranilate phosphoribosyltransferase (343 aa).

5-phospho-alpha-D-ribose 1-diphosphate is bound by residues G83, 86–87 (GD), T91, 93–96 (NIST), 111–119 (KHGGRSVSS), and S123. G83 serves as a coordination point for anthranilate. S95 provides a ligand contact to Mg(2+). R169 lines the anthranilate pocket. Residues D228 and E229 each coordinate Mg(2+).

It belongs to the anthranilate phosphoribosyltransferase family. Homodimer. Mg(2+) serves as cofactor.

It catalyses the reaction N-(5-phospho-beta-D-ribosyl)anthranilate + diphosphate = 5-phospho-alpha-D-ribose 1-diphosphate + anthranilate. It functions in the pathway amino-acid biosynthesis; L-tryptophan biosynthesis; L-tryptophan from chorismate: step 2/5. In terms of biological role, catalyzes the transfer of the phosphoribosyl group of 5-phosphorylribose-1-pyrophosphate (PRPP) to anthranilate to yield N-(5'-phosphoribosyl)-anthranilate (PRA). The sequence is that of Anthranilate phosphoribosyltransferase from Thiobacillus denitrificans (strain ATCC 25259 / T1).